A 288-amino-acid polypeptide reads, in one-letter code: Quinate/shikimate dehydrogenase (288 aa).

Positions 71 and 107 each coordinate substrate. Residues 132-135 (AGGA), 155-158 (NRRD), lysine 205, 232-235 (CVYN), and glycine 255 contribute to the NAD(+) site.

It belongs to the shikimate dehydrogenase family. As to quaternary structure, homodimer.

It carries out the reaction L-quinate + NAD(+) = 3-dehydroquinate + NADH + H(+). It catalyses the reaction L-quinate + NADP(+) = 3-dehydroquinate + NADPH + H(+). The enzyme catalyses shikimate + NADP(+) = 3-dehydroshikimate + NADPH + H(+). The catalysed reaction is shikimate + NAD(+) = 3-dehydroshikimate + NADH + H(+). The protein operates within metabolic intermediate biosynthesis; chorismate biosynthesis; chorismate from D-erythrose 4-phosphate and phosphoenolpyruvate: step 4/7. Its function is as follows. The actual biological function of YdiB remains unclear, nor is it known whether 3-dehydroshikimate or quinate represents the natural substrate. Catalyzes the reversible NAD-dependent reduction of both 3-dehydroshikimate (DHSA) and 3-dehydroquinate to yield shikimate (SA) and quinate, respectively. It can use both NAD or NADP for catalysis, however it has higher catalytic efficiency with NAD. In Escherichia coli O17:K52:H18 (strain UMN026 / ExPEC), this protein is Quinate/shikimate dehydrogenase.